The chain runs to 190 residues: Threonylcarbamoyl-AMP synthase (190 aa).

One can recognise a YrdC-like domain in the interval 7 to 190; that stretch reads GDAIAAAIDV…ALTGELFRQG (184 aa).

Belongs to the SUA5 family. TsaC subfamily.

The protein localises to the cytoplasm. The enzyme catalyses L-threonine + hydrogencarbonate + ATP = L-threonylcarbamoyladenylate + diphosphate + H2O. Functionally, required for the formation of a threonylcarbamoyl group on adenosine at position 37 (t(6)A37) in tRNAs that read codons beginning with adenine. Catalyzes the conversion of L-threonine, HCO(3)(-)/CO(2) and ATP to give threonylcarbamoyl-AMP (TC-AMP) as the acyladenylate intermediate, with the release of diphosphate. The sequence is that of Threonylcarbamoyl-AMP synthase from Escherichia coli O6:H1 (strain CFT073 / ATCC 700928 / UPEC).